The chain runs to 230 residues: Probable endonuclease C19F8.04c (230 aa).

The chain crosses the membrane as a helical span at residues 10 to 27 (AIIGTGLITTSIGGFFFL). The 162-residue stretch at 55–216 (KTMFGYVTRV…KKKKLSLWSQ (162 aa)) folds into the TNase-like domain. The active site involves Arg104. Asp109 is a Ca(2+) binding site. Active-site residues include Glu112 and Arg152.

The protein belongs to the LCL3 family.

The protein localises to the mitochondrion. The protein resides in the membrane. The polypeptide is Probable endonuclease C19F8.04c (Schizosaccharomyces pombe (strain 972 / ATCC 24843) (Fission yeast)).